Here is a 353-residue protein sequence, read N- to C-terminus: UPF0283 membrane protein YcjF (353 aa).

Residues 1–19 are compositionally biased toward basic and acidic residues; it reads MSEPLKPRIDFAEPLKEES. A disordered region spans residues 1-29; it reads MSEPLKPRIDFAEPLKEESTSTFKAQQTF. Polar residues predominate over residues 20-29; that stretch reads TSTFKAQQTF. Helical transmembrane passes span 70–90, 100–120, and 213–233; these read MVLG…IQWT, AALG…GSVI, and ESTL…FIAW.

The protein belongs to the UPF0283 family.

It is found in the cell inner membrane. The sequence is that of UPF0283 membrane protein YcjF from Salmonella arizonae (strain ATCC BAA-731 / CDC346-86 / RSK2980).